A 175-amino-acid polypeptide reads, in one-letter code: Alpha-crystallin B chain (175 aa).

Met-1 carries the post-translational modification N-acetylmethionine. Ser-19 bears the Phosphoserine mark. Ser-41 carries O-linked (GlcNAc) serine glycosylation. 2 positions are modified to phosphoserine: Ser-45 and Ser-59. Residues 56 to 164 (RAPSWIDTGL…PERTIPITRE (109 aa)) enclose the sHSP domain. His-83 is a binding site for Zn(2+). A glycan (N-linked (Glc) (glycation) lysine) is linked at Lys-90. Lys-92 is subject to N6-acetyllysine; alternate. Lys-92 is a glycosylation site (N-linked (Glc) (glycation) lysine; alternate). Residues His-104, Glu-106, His-111, and His-119 each coordinate Zn(2+). Residues 144–175 (TVNGPRKQASGPERTIPITREEKPAVTAAPKK) form a disordered region. Position 166 is an N6-acetyllysine (Lys-166). A glycan (O-linked (GlcNAc) threonine) is linked at Thr-170.

Belongs to the small heat shock protein (HSP20) family. In terms of assembly, heteromer composed of three CRYAA and one CRYAB subunits. Aggregates with homologous proteins, including the small heat shock protein HSPB1, to form large heteromeric complexes. Inter-subunit bridging via zinc ions enhances stability, which is crucial as there is no protein turn over in the lens. Interacts with HSPBAP1 and TTN/titin. Interacts with TMEM109; in the cellular response to DNA damage. Interacts with DES; binds rapidly during early stages of DES filament assembly and a reduced binding seen in the later stages. Interacts with TMED10; the interaction mediates the translocation from the cytoplasm into the ERGIC (endoplasmic reticulum-Golgi intermediate compartment) and thereby secretion. Interacts with ATP6V1A and with MTOR, forming a ternary complex. In terms of processing, it is not known whether either Lys-90, or Lys-92, or both are glycated. In terms of tissue distribution, lens as well as other tissues.

It is found in the cytoplasm. The protein resides in the nucleus. The protein localises to the secreted. It localises to the lysosome. Its function is as follows. May contribute to the transparency and refractive index of the lens. Has chaperone-like activity, preventing aggregation of various proteins under a wide range of stress conditions. In lens epithelial cells, stabilizes the ATP6V1A protein, preventing its degradation by the proteasome. In Bos taurus (Bovine), this protein is Alpha-crystallin B chain (CRYAB).